A 453-amino-acid polypeptide reads, in one-letter code: UDP-N-acetylmuramoylalanine--D-glutamate ligase (453 aa).

115–121 (GSNGKTT) contacts ATP.

Belongs to the MurCDEF family.

It localises to the cytoplasm. The enzyme catalyses UDP-N-acetyl-alpha-D-muramoyl-L-alanine + D-glutamate + ATP = UDP-N-acetyl-alpha-D-muramoyl-L-alanyl-D-glutamate + ADP + phosphate + H(+). It functions in the pathway cell wall biogenesis; peptidoglycan biosynthesis. In terms of biological role, cell wall formation. Catalyzes the addition of glutamate to the nucleotide precursor UDP-N-acetylmuramoyl-L-alanine (UMA). This Koribacter versatilis (strain Ellin345) protein is UDP-N-acetylmuramoylalanine--D-glutamate ligase.